A 407-amino-acid chain; its full sequence is Argininosuccinate synthase (407 aa).

ATP-binding positions include 13-21 (AYSGGLDTS) and Ala-40. Tyr-91 and Ser-96 together coordinate L-citrulline. Gly-121 lines the ATP pocket. L-aspartate-binding residues include Thr-123, Asn-127, and Asp-128. Asn-127 lines the L-citrulline pocket. L-citrulline is bound by residues Arg-131, Ser-182, Ser-191, Glu-267, and Tyr-279.

This sequence belongs to the argininosuccinate synthase family. Type 1 subfamily. Homotetramer.

The protein resides in the cytoplasm. It catalyses the reaction L-citrulline + L-aspartate + ATP = 2-(N(omega)-L-arginino)succinate + AMP + diphosphate + H(+). It functions in the pathway amino-acid biosynthesis; L-arginine biosynthesis; L-arginine from L-ornithine and carbamoyl phosphate: step 2/3. The polypeptide is Argininosuccinate synthase (Bartonella bacilliformis (strain ATCC 35685 / KC583 / Herrer 020/F12,63)).